Here is a 218-residue protein sequence, read N- to C-terminus: Peptide deformylase (218 aa).

Fe cation is bound by residues Cys-130 and His-172. Glu-173 is a catalytic residue. Position 176 (His-176) interacts with Fe cation.

This sequence belongs to the polypeptide deformylase family. Requires Fe(2+) as cofactor.

It catalyses the reaction N-terminal N-formyl-L-methionyl-[peptide] + H2O = N-terminal L-methionyl-[peptide] + formate. Its function is as follows. Removes the formyl group from the N-terminal Met of newly synthesized proteins. Requires at least a dipeptide for an efficient rate of reaction. N-terminal L-methionine is a prerequisite for activity but the enzyme has broad specificity at other positions. This Bifidobacterium adolescentis (strain ATCC 15703 / DSM 20083 / NCTC 11814 / E194a) protein is Peptide deformylase.